We begin with the raw amino-acid sequence, 236 residues long: Small ribosomal subunit protein uS3 (236 aa).

Positions 39-107 constitute a KH type-2 domain; that stretch reads IREFLTEELK…DTSLNIVEVR (69 aa). The tract at residues 214 to 236 is disordered; sequence ASERRAVEGDNQGSSSNRRRENA.

Belongs to the universal ribosomal protein uS3 family. Part of the 30S ribosomal subunit. Forms a tight complex with proteins S10 and S14.

Binds the lower part of the 30S subunit head. Binds mRNA in the 70S ribosome, positioning it for translation. This is Small ribosomal subunit protein uS3 from Brucella melitensis biotype 1 (strain ATCC 23456 / CCUG 17765 / NCTC 10094 / 16M).